Reading from the N-terminus, the 220-residue chain is ATP synthase F(0) complex subunit a (220 aa).

6 consecutive transmembrane segments (helical) span residues 12–32 (PTLLGVPLIAVAMMFPWTLLP), 69–89 (WAMILMSLNLLGLLPYTFTPT), 91–111 (QLSLNMGLAIPFWLATVLLGL), 130–150 (LLIPILIIIETISLLIRPFAL), 158–178 (LTAGHLLMQLIATAAFVLLPM), and 183–203 (ALLTTLVLFLLTLLEIAVAMI).

This sequence belongs to the ATPase A chain family. Component of the ATP synthase complex composed at least of ATP5F1A/subunit alpha, ATP5F1B/subunit beta, ATP5MC1/subunit c (homooctomer), MT-ATP6/subunit a, MT-ATP8/subunit 8, ATP5ME/subunit e, ATP5MF/subunit f, ATP5MG/subunit g, ATP5MK/subunit k, ATP5MJ/subunit j, ATP5F1C/subunit gamma, ATP5F1D/subunit delta, ATP5F1E/subunit epsilon, ATP5PF/subunit F6, ATP5PB/subunit b, ATP5PD/subunit d, ATP5PO/subunit OSCP. ATP synthase complex consists of a soluble F(1) head domain (subunits alpha(3) and beta(3)) - the catalytic core - and a membrane F(0) domain - the membrane proton channel (subunits c, a, 8, e, f, g, k and j). These two domains are linked by a central stalk (subunits gamma, delta, and epsilon) rotating inside the F1 region and a stationary peripheral stalk (subunits F6, b, d, and OSCP). Interacts with DNAJC30; interaction is direct.

The protein resides in the mitochondrion inner membrane. The catalysed reaction is H(+)(in) = H(+)(out). In terms of biological role, subunit a, of the mitochondrial membrane ATP synthase complex (F(1)F(0) ATP synthase or Complex V) that produces ATP from ADP in the presence of a proton gradient across the membrane which is generated by electron transport complexes of the respiratory chain. ATP synthase complex consist of a soluble F(1) head domain - the catalytic core - and a membrane F(1) domain - the membrane proton channel. These two domains are linked by a central stalk rotating inside the F(1) region and a stationary peripheral stalk. During catalysis, ATP synthesis in the catalytic domain of F(1) is coupled via a rotary mechanism of the central stalk subunits to proton translocation. With the subunit c (ATP5MC1), forms the proton-conducting channel in the F(0) domain, that contains two crucial half-channels (inlet and outlet) that facilitate proton movement from the mitochondrial intermembrane space (IMS) into the matrix. Protons are taken up via the inlet half-channel and released through the outlet half-channel, following a Grotthuss mechanism. This is ATP synthase F(0) complex subunit a from Latimeria chalumnae (Coelacanth).